Here is a 75-residue protein sequence, read N- to C-terminus: Penaeidin-3m (75 aa).

An N-terminal signal peptide occupies residues 1 to 19 (MRLVVCLVFLASFALVCQG). Q20 is subject to Pyrrolidone carboxylic acid. Disulfide bonds link C44-C59, C48-C66, and C60-C67. A Serine amide modification is found at S74.

Belongs to the penaeidin family.

Its subcellular location is the cytoplasmic granule. In terms of biological role, antibacterial and antifungal activity. Presents chitin-binding activity. The protein is Penaeidin-3m of Penaeus setiferus (Atlantic white shrimp).